A 129-amino-acid polypeptide reads, in one-letter code: Ferredoxin-1 (129 aa).

The region spanning 29-120 (SDMDLDDEDY…EVKIVYNAKH (92 aa)) is the 2Fe-2S ferredoxin-type domain. Cys-64, Cys-69, Cys-72, and Cys-103 together coordinate [2Fe-2S] cluster.

It belongs to the 2Fe2S plant-type ferredoxin family. [2Fe-2S] cluster serves as cofactor.

Functionally, ferredoxins are iron-sulfur proteins that transfer electrons in a wide variety of metabolic reactions. The chain is Ferredoxin-1 (fer1) from Haloarcula marismortui (strain ATCC 43049 / DSM 3752 / JCM 8966 / VKM B-1809) (Halobacterium marismortui).